Here is a 323-residue protein sequence, read N- to C-terminus: tRNA U34 carboxymethyltransferase (323 aa).

Carboxy-S-adenosyl-L-methionine contacts are provided by residues Lys91, Trp105, Lys110, Gly130, Asp152–Thr154, Ile181–Glu182, Met196, Tyr200, and Arg315.

The protein belongs to the class I-like SAM-binding methyltransferase superfamily. CmoB family. As to quaternary structure, homotetramer.

It carries out the reaction carboxy-S-adenosyl-L-methionine + 5-hydroxyuridine(34) in tRNA = 5-carboxymethoxyuridine(34) in tRNA + S-adenosyl-L-homocysteine + H(+). Catalyzes carboxymethyl transfer from carboxy-S-adenosyl-L-methionine (Cx-SAM) to 5-hydroxyuridine (ho5U) to form 5-carboxymethoxyuridine (cmo5U) at position 34 in tRNAs. The protein is tRNA U34 carboxymethyltransferase of Escherichia coli O7:K1 (strain IAI39 / ExPEC).